We begin with the raw amino-acid sequence, 290 residues long: Translin-associated protein X (290 aa).

Residues 1-32 (MSNKEGSGGFRKRKHDNFPHNQRREGKDVNSS) are disordered. Basic and acidic residues predominate over residues 16–28 (DNFPHNQRREGKD). The tract at residues 73–208 (LLHRITSAPD…MRMCINSVGN (136 aa)) is interaction with C1D. Residues glutamate 129 and glutamate 197 each coordinate Mg(2+). Lysine 279 is covalently cross-linked (Glycyl lysine isopeptide (Lys-Gly) (interchain with G-Cter in SUMO2)).

Belongs to the translin family. Ring-shaped heterooctamer of six TSN and two TSNAX subunits. Interacts with GOLGA3, TSNAXIP1, SUN1 and AKAP9. Interacts with the homodimeric form of C1D following gamma-radiation. Interacts with TSN and C1D in a mutually exclusive manner. Sumoylated with SUMO1.

It localises to the cytoplasm. It is found in the perinuclear region. The protein localises to the golgi apparatus. The protein resides in the nucleus. In terms of biological role, acts in combination with TSN as an endonuclease involved in the activation of the RNA-induced silencing complex (RISC). Possible role in spermatogenesis. The chain is Translin-associated protein X (TSNAX) from Pongo abelii (Sumatran orangutan).